The following is a 157-amino-acid chain: Frd operon probable iron-sulfur subunit A (157 aa).

4Fe-4S ferredoxin-type domains follow at residues 24–55 (KGFS…IHNK), 56–85 (DYYY…VVSR), and 100–133 (FKAE…CIDR). C34, C37, C42, C46, C65, C68, C71, C75, C107, C110, C119, and C123 together coordinate [4Fe-4S] cluster.

The chain is Frd operon probable iron-sulfur subunit A from Proteus vulgaris.